The primary structure comprises 82 residues: MVTIRLARGGAKKRPFYNIVVADSRNARDGRFIERVGFFNPLARGQEETLRLDLARVEHWVANGAATTDRVAKLIKDAKAAA.

The protein belongs to the bacterial ribosomal protein bS16 family.

This is Small ribosomal subunit protein bS16 from Shewanella sp. (strain ANA-3).